Reading from the N-terminus, the 462-residue chain is Putative E3 ubiquitin-protein ligase XBAT35 (462 aa).

3 ANK repeats span residues 6 to 35 (SKGE…DLEW), 39 to 69 (EGKT…NVNA), and 75 to 104 (HAGT…NPLV). Disordered stretches follow at residues 277–341 (HPPV…GKAS) and 356–402 (SSPS…EGER). A compositionally biased stretch (polar residues) spans 304 to 317 (SLHTTMSDPSNLNH). Positions 319–341 (SIGQASSSSGPSSSTAPPSGKAS) are enriched in low complexity. Residues 411 to 450 (CAICLDAPSEAVCVPCGHVAGCMSCLKEIKSKNWGCPVCR) form an RING-type zinc finger.

The catalysed reaction is S-ubiquitinyl-[E2 ubiquitin-conjugating enzyme]-L-cysteine + [acceptor protein]-L-lysine = [E2 ubiquitin-conjugating enzyme]-L-cysteine + N(6)-ubiquitinyl-[acceptor protein]-L-lysine.. It functions in the pathway protein modification; protein ubiquitination. Its function is as follows. No E3 ubiquitin-protein ligase activity observed when associated with the E2 enzyme UBC8 in vitro. In Arabidopsis thaliana (Mouse-ear cress), this protein is Putative E3 ubiquitin-protein ligase XBAT35 (XBAT35).